We begin with the raw amino-acid sequence, 328 residues long: Probable D,D-dipeptide transport ATP-binding protein DdpD (328 aa).

In terms of domain architecture, ABC transporter spans 6-257; that stretch reads LDIQQLHLSF…PRHPYTIGLL (252 aa). 42 to 49 is an ATP binding site; sequence GESGSGKS.

It belongs to the ABC transporter superfamily. The complex is composed of two ATP-binding proteins (DdpD and DdpF), two transmembrane proteins (DdpB and DdpC) and a solute-binding protein (DdpA).

The protein resides in the cell inner membrane. Its function is as follows. Part of the ABC transporter complex DdpABCDF, which is probably involved in D,D-dipeptide transport. Probably responsible for energy coupling to the transport system. The polypeptide is Probable D,D-dipeptide transport ATP-binding protein DdpD (Escherichia coli (strain K12)).